Consider the following 253-residue polypeptide: Sporulated oocyst TA4 antigen (253 aa).

A signal peptide spans 1–23 (MARLSFVSLLSLSLLFGQQAVRA). Residues 182–184 (RRL) constitute a propeptide, removed in mature form.

In terms of assembly, the TA4 antigen is composed of a 17 kDa and a 8 kDa chain, linked by a disulfide bond.

This chain is Sporulated oocyst TA4 antigen, found in Eimeria tenella (Coccidian parasite).